The primary structure comprises 103 residues: Phosphoribosyl-ATP pyrophosphatase (103 aa).

The protein belongs to the PRA-PH family.

It localises to the cytoplasm. It carries out the reaction 1-(5-phospho-beta-D-ribosyl)-ATP + H2O = 1-(5-phospho-beta-D-ribosyl)-5'-AMP + diphosphate + H(+). It participates in amino-acid biosynthesis; L-histidine biosynthesis; L-histidine from 5-phospho-alpha-D-ribose 1-diphosphate: step 2/9. The chain is Phosphoribosyl-ATP pyrophosphatase from Cereibacter sphaeroides (strain ATCC 17029 / ATH 2.4.9) (Rhodobacter sphaeroides).